The sequence spans 124 residues: Small ribosomal subunit protein uS12 (124 aa).

Residue aspartate 89 is modified to 3-methylthioaspartic acid. The interval 104-124 is disordered; that stretch reads TAGVKDRRQSRSKYGAKAPKE.

It belongs to the universal ribosomal protein uS12 family. As to quaternary structure, part of the 30S ribosomal subunit. Contacts proteins S8 and S17. May interact with IF1 in the 30S initiation complex.

With S4 and S5 plays an important role in translational accuracy. In terms of biological role, interacts with and stabilizes bases of the 16S rRNA that are involved in tRNA selection in the A site and with the mRNA backbone. Located at the interface of the 30S and 50S subunits, it traverses the body of the 30S subunit contacting proteins on the other side and probably holding the rRNA structure together. The combined cluster of proteins S8, S12 and S17 appears to hold together the shoulder and platform of the 30S subunit. This Synechococcus sp. (strain CC9605) protein is Small ribosomal subunit protein uS12.